The sequence spans 234 residues: UPF0173 metal-dependent hydrolase Rleg2_1519 (234 aa).

The protein belongs to the UPF0173 family.

The chain is UPF0173 metal-dependent hydrolase Rleg2_1519 from Rhizobium leguminosarum bv. trifolii (strain WSM2304).